The chain runs to 365 residues: Fucose-specific lectin (365 aa).

An N-terminal signal peptide occupies residues 1 to 21 (MKLLHFTILLQVSLFPASSLA). Tandem repeats lie at residues 22–79 (QAGG…NDTI), 80–141 (AKAR…NQYN), 142–206 (FQVA…RLAN), 207–261 (FGPA…VRTA), 262–309 (KPRT…DGAF), and 310–365 (EHSA…IPPA). The interval 22-365 (QAGGNNTEVQ…RRGILAIPPA (344 aa)) is 6 X approximate tandem repeats. Asn26 is a glycosylation site (N-linked (GlcNAc...) asparagine). Arg51, Glu63, and Trp70 together coordinate beta-L-fucose. Residues Asn76 and Asn85 are each glycosylated (N-linked (GlcNAc...) asparagine). Arg111 lines the beta-L-fucose pocket. An N-linked (GlcNAc...) asparagine glycan is attached at Asn118. 6 residues coordinate beta-L-fucose: Glu123, Trp132, Arg164, Glu176, Trp201, and Arg231. N-linked (GlcNAc...) asparagine glycosylation occurs at Asn248. Arg283, Arg333, and Glu347 together coordinate beta-L-fucose.

Belongs to the fungal fucose-specific lectin family. As to quaternary structure, homodimer.

The protein resides in the secreted. Its function is as follows. Probable L-fucose-binding lectin. The polypeptide is Fucose-specific lectin (Arthroderma benhamiae (strain ATCC MYA-4681 / CBS 112371) (Trichophyton mentagrophytes)).